Consider the following 424-residue polypeptide: Tol-Pal system protein TolB (424 aa).

The first 16 residues, 1–16 (MKQLLVLILSLYTTLA), serve as a signal peptide directing secretion.

The protein belongs to the TolB family. In terms of assembly, the Tol-Pal system is composed of five core proteins: the inner membrane proteins TolA, TolQ and TolR, the periplasmic protein TolB and the outer membrane protein Pal. They form a network linking the inner and outer membranes and the peptidoglycan layer.

The protein localises to the periplasm. Part of the Tol-Pal system, which plays a role in outer membrane invagination during cell division and is important for maintaining outer membrane integrity. This is Tol-Pal system protein TolB from Ruthia magnifica subsp. Calyptogena magnifica.